A 432-amino-acid polypeptide reads, in one-letter code: Tol-Pal system protein TolB (432 aa).

Residues 1–29 (MMRNVWKSGLRRSAWIGLLMVLCVGVARA) form the signal peptide.

It belongs to the TolB family. As to quaternary structure, the Tol-Pal system is composed of five core proteins: the inner membrane proteins TolA, TolQ and TolR, the periplasmic protein TolB and the outer membrane protein Pal. They form a network linking the inner and outer membranes and the peptidoglycan layer.

It localises to the periplasm. In terms of biological role, part of the Tol-Pal system, which plays a role in outer membrane invagination during cell division and is important for maintaining outer membrane integrity. In Ralstonia nicotianae (strain ATCC BAA-1114 / GMI1000) (Ralstonia solanacearum), this protein is Tol-Pal system protein TolB.